Here is an 83-residue protein sequence, read N- to C-terminus: Large ribosomal subunit protein bL27 (83 aa).

This sequence belongs to the bacterial ribosomal protein bL27 family.

This chain is Large ribosomal subunit protein bL27 (rpmA), found in Thermotoga maritima (strain ATCC 43589 / DSM 3109 / JCM 10099 / NBRC 100826 / MSB8).